Consider the following 205-residue polypeptide: Holliday junction branch migration complex subunit RuvA (205 aa).

A domain I region spans residues Met-1 to Ile-64. The tract at residues Thr-65 to Glu-143 is domain II. Residues Arg-144 to Ala-156 are flexible linker. Residues Ala-157–Leu-205 form a domain III region.

This sequence belongs to the RuvA family. Homotetramer. Forms an RuvA(8)-RuvB(12)-Holliday junction (HJ) complex. HJ DNA is sandwiched between 2 RuvA tetramers; dsDNA enters through RuvA and exits via RuvB. An RuvB hexamer assembles on each DNA strand where it exits the tetramer. Each RuvB hexamer is contacted by two RuvA subunits (via domain III) on 2 adjacent RuvB subunits; this complex drives branch migration. In the full resolvosome a probable DNA-RuvA(4)-RuvB(12)-RuvC(2) complex forms which resolves the HJ.

The protein resides in the cytoplasm. In terms of biological role, the RuvA-RuvB-RuvC complex processes Holliday junction (HJ) DNA during genetic recombination and DNA repair, while the RuvA-RuvB complex plays an important role in the rescue of blocked DNA replication forks via replication fork reversal (RFR). RuvA specifically binds to HJ cruciform DNA, conferring on it an open structure. The RuvB hexamer acts as an ATP-dependent pump, pulling dsDNA into and through the RuvAB complex. HJ branch migration allows RuvC to scan DNA until it finds its consensus sequence, where it cleaves and resolves the cruciform DNA. The protein is Holliday junction branch migration complex subunit RuvA of Shewanella frigidimarina (strain NCIMB 400).